The sequence spans 274 residues: Urease accessory protein UreD (274 aa).

Belongs to the UreD family. In terms of assembly, ureD, UreF and UreG form a complex that acts as a GTP-hydrolysis-dependent molecular chaperone, activating the urease apoprotein by helping to assemble the nickel containing metallocenter of UreC. The UreE protein probably delivers the nickel.

It is found in the cytoplasm. Its function is as follows. Required for maturation of urease via the functional incorporation of the urease nickel metallocenter. In Lachnoclostridium phytofermentans (strain ATCC 700394 / DSM 18823 / ISDg) (Clostridium phytofermentans), this protein is Urease accessory protein UreD.